Reading from the N-terminus, the 675-residue chain is DNA ligase 1 (675 aa).

Residues 34-38 (DFEYD), 83-84 (SL), and Glu114 contribute to the NAD(+) site. The active-site N6-AMP-lysine intermediate is the Lys116. 4 residues coordinate NAD(+): Arg137, Glu177, Lys295, and Lys319. 4 residues coordinate Zn(2+): Cys413, Cys416, Cys431, and Cys436. Residues 596-675 (NSGSALAGKT…AEFLRLLSGG (80 aa)) form the BRCT domain.

This sequence belongs to the NAD-dependent DNA ligase family. LigA subfamily. The cofactor is Mg(2+). Mn(2+) serves as cofactor.

It carries out the reaction NAD(+) + (deoxyribonucleotide)n-3'-hydroxyl + 5'-phospho-(deoxyribonucleotide)m = (deoxyribonucleotide)n+m + AMP + beta-nicotinamide D-nucleotide.. DNA ligase that catalyzes the formation of phosphodiester linkages between 5'-phosphoryl and 3'-hydroxyl groups in double-stranded DNA using NAD as a coenzyme and as the energy source for the reaction. It is essential for DNA replication and repair of damaged DNA. This chain is DNA ligase 1, found in Opitutus terrae (strain DSM 11246 / JCM 15787 / PB90-1).